The sequence spans 221 residues: Eukaryotic translation initiation factor 3 subunit K (221 aa).

A PCI domain is found at 46-207; sequence YDLEANLACL…NIKTKHITEK (162 aa).

The protein belongs to the eIF-3 subunit K family. As to quaternary structure, component of the eukaryotic translation initiation factor 3 (eIF-3) complex.

The protein localises to the cytoplasm. Component of the eukaryotic translation initiation factor 3 (eIF-3) complex, which is involved in protein synthesis of a specialized repertoire of mRNAs and, together with other initiation factors, stimulates binding of mRNA and methionyl-tRNAi to the 40S ribosome. The eIF-3 complex specifically targets and initiates translation of a subset of mRNAs involved in cell proliferation. In Culex quinquefasciatus (Southern house mosquito), this protein is Eukaryotic translation initiation factor 3 subunit K.